The following is a 271-amino-acid chain: Enolase-phosphatase E1 (271 aa).

Residues Asp18 and Glu20 each coordinate Mg(2+). Substrate contacts are provided by residues 144–145 (SS) and Lys194. Asp221 lines the Mg(2+) pocket.

This sequence belongs to the HAD-like hydrolase superfamily. MasA/MtnC family. As to quaternary structure, monomer. Mg(2+) is required as a cofactor.

It is found in the cytoplasm. The protein resides in the nucleus. It carries out the reaction 5-methylsulfanyl-2,3-dioxopentyl phosphate + H2O = 1,2-dihydroxy-5-(methylsulfanyl)pent-1-en-3-one + phosphate. It participates in amino-acid biosynthesis; L-methionine biosynthesis via salvage pathway; L-methionine from S-methyl-5-thio-alpha-D-ribose 1-phosphate: step 3/6. Its pathway is amino-acid biosynthesis; L-methionine biosynthesis via salvage pathway; L-methionine from S-methyl-5-thio-alpha-D-ribose 1-phosphate: step 4/6. Its function is as follows. Bifunctional enzyme that catalyzes the enolization of 2,3-diketo-5-methylthiopentyl-1-phosphate (DK-MTP-1-P) into the intermediate 2-hydroxy-3-keto-5-methylthiopentenyl-1-phosphate (HK-MTPenyl-1-P), which is then dephosphorylated to form the acireductone 1,2-dihydroxy-3-keto-5-methylthiopentene (DHK-MTPene). This is Enolase-phosphatase E1 from Candida albicans (strain WO-1) (Yeast).